An 86-amino-acid polypeptide reads, in one-letter code: Putative regulatory protein Desal_2819 (86 aa).

Belongs to the RemA family.

This chain is Putative regulatory protein Desal_2819, found in Maridesulfovibrio salexigens (strain ATCC 14822 / DSM 2638 / NCIMB 8403 / VKM B-1763) (Desulfovibrio salexigens).